The primary structure comprises 356 residues: tRNA N6-adenosine threonylcarbamoyltransferase (356 aa).

Fe cation-binding residues include His-115 and His-119. Residues 138-142, Asp-171, Gly-184, and Asn-283 contribute to the substrate site; that span reads LVSGG. Asp-311 contributes to the Fe cation binding site.

This sequence belongs to the KAE1 / TsaD family. It depends on Fe(2+) as a cofactor.

It localises to the cytoplasm. It carries out the reaction L-threonylcarbamoyladenylate + adenosine(37) in tRNA = N(6)-L-threonylcarbamoyladenosine(37) in tRNA + AMP + H(+). In terms of biological role, required for the formation of a threonylcarbamoyl group on adenosine at position 37 (t(6)A37) in tRNAs that read codons beginning with adenine. Is involved in the transfer of the threonylcarbamoyl moiety of threonylcarbamoyl-AMP (TC-AMP) to the N6 group of A37, together with TsaE and TsaB. TsaD likely plays a direct catalytic role in this reaction. In Prochlorococcus marinus (strain NATL1A), this protein is tRNA N6-adenosine threonylcarbamoyltransferase.